The following is a 147-amino-acid chain: Hemoglobin subunit epsilon (147 aa).

The 145-residue stretch at 3–147 (HFTAEEKATV…VANALAHKYH (145 aa)) folds into the Globin domain. A phosphoserine mark is found at Ser-14 and Ser-51. His-64 and His-93 together coordinate heme b.

Belongs to the globin family. Heterotetramer of two alpha chains and two epsilon chains in early embryonic hemoglobin Gower-2; two zeta chains and two epsilon chains in early embryonic hemoglobin Gower-1. Red blood cells.

In terms of biological role, the epsilon chain is a beta-type chain of early mammalian embryonic hemoglobin. The sequence is that of Hemoglobin subunit epsilon (HBE1) from Bradypus tridactylus (Pale-throated three-toed sloth).